The following is a 97-amino-acid chain: Putative membrane protein insertion efficiency factor (97 aa).

Residues V68 to H97 form a disordered region. A compositionally biased stretch (polar residues) spans E72 to H97.

It belongs to the UPF0161 family.

It localises to the cell inner membrane. Its function is as follows. Could be involved in insertion of integral membrane proteins into the membrane. The polypeptide is Putative membrane protein insertion efficiency factor (Marinobacter nauticus (strain ATCC 700491 / DSM 11845 / VT8) (Marinobacter aquaeolei)).